The chain runs to 153 residues: UPF0311 protein RPA1785 (153 aa).

The protein belongs to the UPF0311 family.

This is UPF0311 protein RPA1785 from Rhodopseudomonas palustris (strain ATCC BAA-98 / CGA009).